The sequence spans 201 residues: uncharacterized protein (201 aa).

The helical transmembrane segment at 11-31 (IIILTIMILTIIIFTRTINGL) threads the bilayer.

Its subcellular location is the membrane. This is an uncharacterized protein from Acanthamoeba polyphaga mimivirus (APMV).